The primary structure comprises 568 residues: Envelope glycoprotein E (568 aa).

Positions 1 to 20 (MMPATLAGLALAVTVATMFA) are cleaved as a signal peptide. The Virion surface segment spans residues 21–422 (QRVDSTTIHH…GGGPGNSKRR (402 aa)). Residues Asn88, Asn179, and Asn248 are each glycosylated (N-linked (GlcNAc...) asparagine; by host). Residues Cys271 and Cys280 are joined by a disulfide bond. A helical membrane pass occupies residues 423 to 443 (AAVLGAAVWIALTLLILGGLG). Over 444–568 (AYVAVNKKCL…ANKTFPSQRY (125 aa)) the chain is Intravirion. The Internalization motif motif lies at 465–468 (KPTL). The segment at 470-534 (THAHTYTSLP…SRRNSFGPTL (65 aa)) is disordered. Positions 482 to 497 (GDLSLEQDAEDEDEDE) are acidic. Residues 486-500 (LEQDAEDEDEDEEEL) show a composition bias toward acidic residues. Basic residues predominate over residues 515-526 (KSSRSPSRRSSR).

Belongs to the alphaherpesvirinae glycoprotein E family. As to quaternary structure, interacts with gI. Post-translationally, phosphorylated on serines within the acidic cluster. Phosphorylation determines whether endocytosed viral gE traffics to the trans-Golgi network or recycles to the cell membrane.

The protein localises to the virion membrane. Its subcellular location is the host cell membrane. The protein resides in the host cell junction. It is found in the host Golgi apparatus membrane. It localises to the host endosome membrane. Its function is as follows. In epithelial cells, the heterodimer gE/gI is required for the cell-to-cell spread of the virus, by sorting nascent virions to cell junctions. Once the virus reaches the cell junctions, virus particles can spread to adjacent cells extremely rapidly through interactions with cellular receptors that accumulate at these junctions. Implicated in basolateral spread in polarized cells. In neuronal cells, gE/gI is essential for the anterograde spread of the infection throughout the host nervous system. Together with US9, the heterodimer gE/gI is involved in the sorting and transport of viral structural components toward axon tips. The chain is Envelope glycoprotein E (US8) from Psittacid herpesvirus 1 (isolate Amazon parrot/-/97-0001/1997) (PsHV-1).